We begin with the raw amino-acid sequence, 401 residues long: Multidrug resistance protein MdtH (401 aa).

The next 11 membrane-spanning stretches (helical) occupy residues 13 to 33 (YFLL…FPLI), 34 to 54 (SIHF…ALGL), 78 to 95 (MIVT…FIAL), 99 to 116 (PWIL…GTLF), 139 to 159 (LLLM…SWLL), 165 to 185 (FVCW…ALFL), 214 to 234 (VLTL…FPII), 243 to 263 (AAVK…LYPI), 289 to 309 (FPVG…LFYL), 340 to 360 (LGLA…YDTG), and 365 to 385 (IPQL…YALH).

Belongs to the major facilitator superfamily. DHA1 family. MdtH (TC 2.A.1.2.21) subfamily.

It is found in the cell inner membrane. The chain is Multidrug resistance protein MdtH from Photorhabdus laumondii subsp. laumondii (strain DSM 15139 / CIP 105565 / TT01) (Photorhabdus luminescens subsp. laumondii).